The sequence spans 1969 residues: Myosin-3 (1969 aa).

The region spanning 33–82 is the Myosin N-terminal SH3-like domain; the sequence is DSKKNCWIPDPEDGFVAAEIQSTTGEQVTVVTVKGNQITVKKDQCQEMNP. The Myosin motor domain occupies 86–791; the sequence is DKTEDMANLT…VLAKLEDLRD (706 aa). Residue K130 is modified to N6,N6,N6-trimethyllysine. Residue 179 to 186 participates in ATP binding; sequence GESGAGKT. 2 actin-binding regions span residues 667–689 and 770–784; these read LNNL…IPNE and KVGE…GVLA. Positions 794-823 constitute an IQ domain; it reads LSRIVTMFQSRIRSYLAKAEVRRRYEQQTG. A coiled-coil region spans residues 857–1969; it reads KEQEAMGELA…IRSSSNARFL (1113 aa). Disordered regions lie at residues 942-966, 1006-1029, 1131-1213, and 1234-1255; these read MQER…TKKH, NKEK…EEDK, LEEE…GDSV, and KSKL…VRSR. 2 stretches are compositionally biased toward basic and acidic residues: residues 1137-1164 and 1176-1197; these read AERN…ERLE and ANKK…DSLN.

Belongs to the TRAFAC class myosin-kinesin ATPase superfamily. Myosin family. In terms of assembly, muscle myosin is a hexameric protein that consists of 2 heavy chain subunits (MHC), 2 alkali light chain subunits (MLC) and 2 regulatory light chain subunits (MLC-2). As to expression, expressed in body wall muscles, neighboring vulval muscle cells and the contractile sheath covering the hermaphrodite gonad (myoepithelial sheath cells).

The protein resides in the cytoplasm. Its subcellular location is the myofibril. It localises to the sarcomere. It is found in the a band. Its function is as follows. Essential for muscle contraction. Involved in ovulation likely by regulating the contraction of gonadal myoepithelial sheath cells. The polypeptide is Myosin-3 (myo-3) (Caenorhabditis elegans).